A 342-amino-acid chain; its full sequence is S-adenosylmethionine:tRNA ribosyltransferase-isomerase (342 aa).

Belongs to the QueA family. Monomer.

It localises to the cytoplasm. It carries out the reaction 7-aminomethyl-7-carbaguanosine(34) in tRNA + S-adenosyl-L-methionine = epoxyqueuosine(34) in tRNA + adenine + L-methionine + 2 H(+). It participates in tRNA modification; tRNA-queuosine biosynthesis. Transfers and isomerizes the ribose moiety from AdoMet to the 7-aminomethyl group of 7-deazaguanine (preQ1-tRNA) to give epoxyqueuosine (oQ-tRNA). This is S-adenosylmethionine:tRNA ribosyltransferase-isomerase from Streptococcus mutans serotype c (strain ATCC 700610 / UA159).